The chain runs to 189 residues: Peptidyl-tRNA hydrolase (189 aa).

Tyr15 serves as a coordination point for tRNA. His20 acts as the Proton acceptor in catalysis. Phe66, Asn68, and Asn114 together coordinate tRNA.

It belongs to the PTH family. As to quaternary structure, monomer.

It is found in the cytoplasm. It carries out the reaction an N-acyl-L-alpha-aminoacyl-tRNA + H2O = an N-acyl-L-amino acid + a tRNA + H(+). Functionally, hydrolyzes ribosome-free peptidyl-tRNAs (with 1 or more amino acids incorporated), which drop off the ribosome during protein synthesis, or as a result of ribosome stalling. Its function is as follows. Catalyzes the release of premature peptidyl moieties from peptidyl-tRNA molecules trapped in stalled 50S ribosomal subunits, and thus maintains levels of free tRNAs and 50S ribosomes. The protein is Peptidyl-tRNA hydrolase of Streptococcus pneumoniae (strain P1031).